A 208-amino-acid chain; its full sequence is N-(5'-phosphoribosyl)anthranilate isomerase (208 aa).

The protein belongs to the TrpF family.

The catalysed reaction is N-(5-phospho-beta-D-ribosyl)anthranilate = 1-(2-carboxyphenylamino)-1-deoxy-D-ribulose 5-phosphate. It participates in amino-acid biosynthesis; L-tryptophan biosynthesis; L-tryptophan from chorismate: step 3/5. This Neisseria meningitidis serogroup C / serotype 2a (strain ATCC 700532 / DSM 15464 / FAM18) protein is N-(5'-phosphoribosyl)anthranilate isomerase.